We begin with the raw amino-acid sequence, 201 residues long: Small ribosomal subunit protein uS4c (201 aa).

The 62-residue stretch at 89-150 (MRLDNILFRL…KQRSKVLIQN (62 aa)) folds into the S4 RNA-binding domain.

The protein belongs to the universal ribosomal protein uS4 family. As to quaternary structure, part of the 30S ribosomal subunit. Contacts protein S5. The interaction surface between S4 and S5 is involved in control of translational fidelity.

Its subcellular location is the plastid. It localises to the chloroplast. Its function is as follows. One of the primary rRNA binding proteins, it binds directly to 16S rRNA where it nucleates assembly of the body of the 30S subunit. Functionally, with S5 and S12 plays an important role in translational accuracy. This chain is Small ribosomal subunit protein uS4c (rps4), found in Dioscorea elephantipes (Elephant's foot yam).